The following is a 370-amino-acid chain: Glutamate 5-kinase (370 aa).

Lys-12 lines the ATP pocket. Positions 52, 139, and 151 each coordinate substrate. ATP-binding positions include 171–172 (SD) and 213–219 (TGGMFTK). A PUA domain is found at 278–356 (QAHIAVDAGA…SDIESILGYS (79 aa)).

It belongs to the glutamate 5-kinase family.

It localises to the cytoplasm. The catalysed reaction is L-glutamate + ATP = L-glutamyl 5-phosphate + ADP. The protein operates within amino-acid biosynthesis; L-proline biosynthesis; L-glutamate 5-semialdehyde from L-glutamate: step 1/2. Its function is as follows. Catalyzes the transfer of a phosphate group to glutamate to form L-glutamate 5-phosphate. The chain is Glutamate 5-kinase from Herpetosiphon aurantiacus (strain ATCC 23779 / DSM 785 / 114-95).